The following is a 1031-amino-acid chain: MMS19 nucleotide excision repair protein homolog (1031 aa).

Alanine 2 is modified (N-acetylalanine). 4 HEAT repeats span residues 867-905 (QRFF…RLPK), 909-947 (LPEL…EAPQ), 950-988 (SLHV…LPTS), and 991-1029 (LPYK…LGSP). Serine 1028 is modified (phosphoserine).

The protein belongs to the MET18/MMS19 family. In terms of assembly, component of the CIA complex. In the CIA complex, interacts directly with CIAO2B and CIAO3. Component of the MMXD complex, composed of CIAO1, ERCC2, CIAO2B, MMS19 and SLC25A5. Interacts with CIAO2B; the interaction is direct. Interacts with ERCC2/XPD; the interaction is direct. Interacts with ERCC3/XPB and NCOA3/RAC3. Interacts with RTEL1; the interaction mediates the association of RTEL1 with the CIA complex. Interacts with BRIP1. Interacts with KIF4A; the interaction facilitates the transfer of Fe-S clusters to KIF4A to ensure proper localization of KIF4A to the mitotic machinery components. Interacts with CCDC117; the interaction is indirect. In terms of processing, ubiquitinated; undergoes 'Lys-48'-linked polyubiquitination. As to expression, ubiquitously expressed with higher expression in testis.

Its subcellular location is the nucleus. It is found in the cytoplasm. It localises to the cytoskeleton. The protein localises to the spindle. Key component of the cytosolic iron-sulfur protein assembly (CIA) complex, a multiprotein complex that mediates the incorporation of iron-sulfur cluster into apoproteins specifically involved in DNA metabolism and genomic integrity. In the CIA complex, MMS19 acts as an adapter between early-acting CIA components and a subset of cellular target Fe/S proteins such as ERCC2/XPD, FANCJ and RTEL1, thereby playing a key role in nucleotide excision repair (NER), homologous recombination-mediated double-strand break DNA repair, DNA replication and RNA polymerase II (POL II) transcription. As a CIA complex component and in collaboration with CIAO1 and CIAO2, binds to and facilitates the assembly of most cytosolic-nuclear Fe/S proteins. As part of the mitotic spindle-associated MMXD complex, plays a role in chromosome segregation, probably by facilitating iron-sulfur cluster assembly into ERCC2/XPD. Together with CIAO2, facilitates the transfer of Fe-S clusters to the motor protein KIF4A, which ensures proper localization of KIF4A to mitotic machinery components to promote the progression of mitosis. Indirectly acts as a transcriptional coactivator of estrogen receptor (ER), via its role in iron-sulfur insertion into some component of the TFIIH-machinery. In Mus musculus (Mouse), this protein is MMS19 nucleotide excision repair protein homolog.